Consider the following 53-residue polypeptide: Unknown protein from 2D-PAGE of needles (53 aa).

The polypeptide is Unknown protein from 2D-PAGE of needles (Pinus pinaster (Maritime pine)).